The chain runs to 198 residues: Cerebellin-4 (198 aa).

An N-terminal signal peptide occupies residues 1 to 24; the sequence is MGSARRALSVVPAVLLILVLPVWA. Residues Asn26 and Asn85 are each glycosylated (N-linked (GlcNAc...) asparagine). Positions 63-198 constitute a C1q domain; sequence AANSKVAFSA…TFSGFLVFPL (136 aa).

Homohexamer; disulfide-linked homotrimers. The trimers are assembled via the globular C1q domains. The trimers associate via N-terminal cysteine residues to form disulfide-linked hexamers. May form oligomers with CBLN1, CBLN2 and CBLN3 prior to secretion. Once secreted, does not interact with other CBLN family members. Strongly interacts with DCC in a NTN1-displaceable fashion. Weakly binds to NRXN1 and NRXN2 long and short isoforms produced by alternative promoter usage. Interaction with NRXN3 short isoform is hardly detectable; no interaction at all with NRXN3 long isoform. Does not interact with NEO1, GRID1 and GRID2. Post-translationally, sialoglycoprotein. In terms of tissue distribution, expressed in brain with high levels in particular thalamic nuclei. In the thalamus, predominantly expressed in neurons within the parafascicular nucleus. Found in the hippocampus, mostly in the dendrites and somata of pyramidal neurons (at protein level). Very low or no expression in most other brain regions. Highly expressed in the ventral medial habenula.

It localises to the secreted. The protein resides in the synapse. In terms of biological role, acts as a synaptic organizer in specific subsets of neurons in the brain. Essential for the formation and maintenance of inhibitory GABAergic synapses. Promotes the development of dendrite-targeting inhibitory GABAergic synapses made by somatostatin-positive interneurons. May contribute to the function of ventral medial habenula region of the brain implicated in the regulation of anxiety-related behaviors. May play a role in CBLN3 export from the endoplasmic reticulum and secretion. This chain is Cerebellin-4 (Cbln4), found in Mus musculus (Mouse).